The following is a 612-amino-acid chain: Baculoviral IAP repeat-containing protein 2 (612 aa).

One copy of the BIR 1 repeat lies at 46 to 113; sequence ELYRMSTYSA…RQFYPSCSFV (68 aa). The residue at position 143 (Arg143) is an Omega-N-methylarginine. At Ser153 the chain carries Phosphoserine. BIR repeat units follow at residues 177-243 and 262-329; these read EEAR…CPFL and HSAR…CEFL. Positions 299, 302, 319, and 326 each coordinate Zn(2+). Residues 447–537 form the CARD domain; it reads MASGDLSLIR…TLYENLFVEK (91 aa). An RING-type zinc finger spans residues 565 to 600; the sequence is CKVCMDREVSIVFIPCGHLVVCQECAPSLRKCPICR.

Belongs to the IAP family. As to quaternary structure, interacts with DIABLO/SMAC and with PRSS25; these interactions inhibit apoptotic suppressor activity. Interacts with CASP9. Interacts (via BIR domains) with TRAF2; the interaction is required for IKBKE ubiquitination. Interacts with E2F1, RIPK1, RIPK2, RIPK3, RIPK4, BIRC5/survivin and USP19. Interacts with HSP90AB1. Interacts with several death receptors, inclusing FAS, TNFRSF10A and TNFRSF10B. Recruited to TNFRSF10B in the absence of receptor stimulation. When TNFRSF10B is stimulated, further recruited to the receptor and cleaved by caspases. Proteolytic fragments remain associated with TNFRSF10B. Post-translationally, auto-ubiquitinated and degraded by the proteasome in apoptotic cells. In terms of processing, upon stimulation of death receptors, including TNFRSF10B, recruited to receptors and cleaved by caspases. Proteolytic fragments remain associated with the receptors. This cleavage presumably inactivates the protein. As to expression, expressed in heart, brain, spleen, lung, liver, skeletal muscle, kidney and testis.

Its subcellular location is the cytoplasm. It is found in the nucleus. The catalysed reaction is S-ubiquitinyl-[E2 ubiquitin-conjugating enzyme]-L-cysteine + [acceptor protein]-L-lysine = [E2 ubiquitin-conjugating enzyme]-L-cysteine + N(6)-ubiquitinyl-[acceptor protein]-L-lysine.. With respect to regulation, the CARD domain inhibits the activation of E3 ubiquitin ligase activity by preventing RING domain dimerization and E2 ubiquitin donor binding and activation. The CARD domain-mediated autoinhibition of the E3 ubiquitin-protein ligase activity suppresses cell proliferation and migration. USP19 regulates the stability of BIRC2/c-IAP1 by preventing its ubiquitination. Multi-functional protein which regulates not only caspases and apoptosis, but also modulates inflammatory signaling and immunity, mitogenic kinase signaling, and cell proliferation, as well as cell invasion and metastasis. Acts as an E3 ubiquitin-protein ligase regulating NF-kappa-B signaling and regulates both canonical and non-canonical NF-kappa-B signaling by acting in opposite directions: acts as a positive regulator of the canonical pathway and suppresses constitutive activation of non-canonical NF-kappa-B signaling. The target proteins for its E3 ubiquitin-protein ligase activity include: RIPK1, RIPK2, RIPK3, RIPK4, CASP3, CASP7, CASP8, TRAF2, DIABLO/SMAC, MAP3K14/NIK, MAP3K5/ASK1, IKBKG/NEMO, IKBKE and MXD1/MAD1. Can also function as an E3 ubiquitin-protein ligase of the NEDD8 conjugation pathway, targeting effector caspases for neddylation and inactivation. Acts as an important regulator of innate immune signaling via regulation of Toll-like receptors (TLRs), Nodlike receptors (NLRs) and RIG-I like receptors (RLRs), collectively referred to as pattern recognition receptors (PRRs). Protects cells from spontaneous formation of the ripoptosome, a large multi-protein complex that has the capability to kill cancer cells in a caspase-dependent and caspase-independent manner. Suppresses ripoptosome formation by ubiquitinating RIPK1 and CASP8. Can stimulate the transcriptional activity of E2F1. Plays a role in the modulation of the cell cycle. The chain is Baculoviral IAP repeat-containing protein 2 (Birc2) from Mus musculus (Mouse).